Consider the following 133-residue polypeptide: UPF0102 protein bll0669 (133 aa).

It belongs to the UPF0102 family.

The polypeptide is UPF0102 protein bll0669 (Bradyrhizobium diazoefficiens (strain JCM 10833 / BCRC 13528 / IAM 13628 / NBRC 14792 / USDA 110)).